The sequence spans 408 residues: Intracellular coagulation inhibitor 2 (408 aa).

A signal peptide spans 1–22 (MLSRRTLDCCLVMLIVSTTFCQ). Cys50 and Cys249 form a disulfide bridge. N-linked (GlcNAc...) asparagine glycosylation is present at Asn174.

It belongs to the serpin family. In terms of assembly, monomer. Forms a covalent heterodimer with clotting factor C chain B. Forms a covalent heterodimer with proclotting enzyme heavy chain. As to expression, specifically expressed in hemocytes (at protein level).

Its subcellular location is the secreted. Serine protease inhibitor that inhibits proclotting enzyme and to a lesser extent clotting factor C and clotting factor G. The protein is Intracellular coagulation inhibitor 2 of Tachypleus tridentatus (Japanese horseshoe crab).